A 251-amino-acid chain; its full sequence is Sugar fermentation stimulation protein homolog (251 aa).

Belongs to the SfsA family.

The chain is Sugar fermentation stimulation protein homolog from Prochlorococcus marinus (strain SARG / CCMP1375 / SS120).